A 191-amino-acid polypeptide reads, in one-letter code: Pyridoxal 5'-phosphate synthase subunit PdxT (191 aa).

Residue 46–48 coordinates L-glutamine; sequence GES. The active-site Nucleophile is C78. L-glutamine is bound by residues R105 and 133–134; that span reads IR. Residues H169 and E171 each act as charge relay system in the active site.

This sequence belongs to the glutaminase PdxT/SNO family. In the presence of PdxS, forms a dodecamer of heterodimers. Only shows activity in the heterodimer.

It catalyses the reaction aldehydo-D-ribose 5-phosphate + D-glyceraldehyde 3-phosphate + L-glutamine = pyridoxal 5'-phosphate + L-glutamate + phosphate + 3 H2O + H(+). It carries out the reaction L-glutamine + H2O = L-glutamate + NH4(+). It participates in cofactor biosynthesis; pyridoxal 5'-phosphate biosynthesis. Its function is as follows. Catalyzes the hydrolysis of glutamine to glutamate and ammonia as part of the biosynthesis of pyridoxal 5'-phosphate. The resulting ammonia molecule is channeled to the active site of PdxS. The polypeptide is Pyridoxal 5'-phosphate synthase subunit PdxT (Brevibacillus brevis (strain 47 / JCM 6285 / NBRC 100599)).